The chain runs to 1194 residues: Metabotropic glutamate receptor 1 (1194 aa).

Residues 1 to 18 (MVGLLLFFFPAIFLEVSL) form the signal peptide. At 19-592 (LPRSPGRKVL…VRYLEWSNIE (574 aa)) the chain is on the extracellular side. Cys-67 and Cys-109 form a disulfide bridge. Tyr-74 is an L-glutamate binding site. The N-linked (GlcNAc...) asparagine glycan is linked to Asn-98. Residues Ser-165 and 186–188 (SAT) each bind L-glutamate. The N-linked (GlcNAc...) asparagine glycan is linked to Asn-223. Tyr-236 provides a ligand contact to L-glutamate. A disulfide bridge links Cys-289 with Cys-291. Asp-318 is a binding site for L-glutamate. A disulfide bridge connects residues Cys-378 and Cys-394. Asn-397 carries N-linked (GlcNAc...) asparagine glycosylation. Lys-409 is an L-glutamate binding site. Cysteines 432 and 439 form a disulfide. N-linked (GlcNAc...) asparagine glycosylation occurs at Asn-515. A helical transmembrane segment spans residues 593–615 (SIIAIAFSCLGILVTLFVTLIFV). Residues 616-629 (LYRDTPVVKSSSRE) lie on the Cytoplasmic side of the membrane. Residues 630–650 (LCYIILAGIFLGYVCPFTLIA) traverse the membrane as a helical segment. Residues 651–658 (KPTTTSCY) lie on the Extracellular side of the membrane. Cys-657 and Cys-746 are disulfide-bonded. A helical transmembrane segment spans residues 659-680 (LQRLLVGLSSAMCYSALVTKTN). Topologically, residues 681-703 (RIARILAGSKKKICTRKPRFMSA) are cytoplasmic. Residues 704-727 (WAQVIIASILISVQLTLVVTLIIM) form a helical membrane-spanning segment. The Extracellular portion of the chain corresponds to 728–750 (EPPMPILSYPSIKEVYLICNTSN). Residues 751 to 772 (LGVVAPLGYNGLLIMSCTYYAF) form a helical membrane-spanning segment. The Cytoplasmic portion of the chain corresponds to 773–785 (KTRNVPANFNEAK). Residues 786-807 (YIAFTMYTTCIIWLAFVPIYFG) traverse the membrane as a helical segment. Residues 808–815 (SNYKIITT) lie on the Extracellular side of the membrane. Residues 816–840 (CFAVSLSVTVALGCMFTPKMYIIIA) traverse the membrane as a helical segment. Topologically, residues 841 to 1194 (KPERNVRSAF…RDYKQSSSTL (354 aa)) are cytoplasmic. Ser-853 bears the Phosphoserine mark. Thr-871 is modified (phosphothreonine). The segment at 883–905 (AGNANSNGKSVSWSEPGGGQVPK) is disordered. Residues 885–895 (NANSNGKSVSW) show a composition bias toward polar residues. Phosphoserine occurs at positions 894 and 969. The disordered stretch occupies residues 1007 to 1030 (PALPKGLPPPLQQQQQPPPQQKSL). Over residues 1012–1026 (GLPPPLQQQQQPPPQ) the composition is skewed to pro residues. Ser-1091 bears the Phosphoserine mark. A disordered region spans residues 1113–1173 (HEREGNTEED…SPVSESVLCT (61 aa)). The segment covering 1119 to 1131 (TEEDELEEEEEDL) has biased composition (acidic residues). Position 1142 is a phosphoserine (Ser-1142). A Phosphothreonine modification is found at Thr-1146. Phosphoserine is present on Ser-1149. The segment covering 1154-1170 (SVASGSSVPSSPVSESV) has biased composition (low complexity).

The protein belongs to the G-protein coupled receptor 3 family. In terms of assembly, homodimer; disulfide-linked. The PPXXF motif binds HOMER1, HOMER2 and HOMER3. Interacts with TAMALIN. Interacts with RYR1, RYR2, ITPR1, SHANK1 and SHANK3. Interacts with SIAH1. Detected in brain.

It is found in the cell membrane. Its subcellular location is the postsynaptic cell membrane. The protein resides in the cell projection. The protein localises to the dendrite. With respect to regulation, signaling is inhibited by the antagonist LY341495. The LY341495 binding site partially overlaps with the glutamate binding site. Signaling is also inhibited by synthetic allosteric regulators, such as FITM (4-fluoro-N-(4-(6-(isopropylamino)pyrimidin-4-yl)thiazol-2-yl)-N-methylbenzamide) that bind in a pocket between the transmembrane helices. G-protein coupled receptor for glutamate. Ligand binding causes a conformation change that triggers signaling via guanine nucleotide-binding proteins (G proteins) and modulates the activity of down-stream effectors. Signaling activates a phosphatidylinositol-calcium second messenger system. May participate in the central action of glutamate in the CNS, such as long-term potentiation in the hippocampus and long-term depression in the cerebellum. May function in the light response in the retina. Induces GRID1 and GRID2 cation-channel activation via GNAQ-PLC-PKC pathway in dopaminergic neurons and cerebellar Purkinje cell, respectively. The chain is Metabotropic glutamate receptor 1 (GRM1) from Homo sapiens (Human).